The chain runs to 206 residues: MMSFEEEQLRDHAVVNLYRIGAIRFGDFILSDGKKTPIYVDMRLVISCPDVLQTIASLIWRLRPSFNSSLLCGVPYTALTLATCISLKYNISMVLRRKELKHPNQEDKIKVEGLFSPGQTCLVINDVIASGRSILDTAKALEDEGLNIRESLVFLDRQVGGADALKEAGIKLRSVFTLEELVKALLSKCQLSETDAAIARTLLETF.

Residues Arg-97, Lys-98, Lys-101, and 125–133 (NDVIASGRS) contribute to the 5-phospho-alpha-D-ribose 1-diphosphate site. An orotate-binding site is contributed by Arg-157.

It belongs to the purine/pyrimidine phosphoribosyltransferase family. PyrE subfamily. In terms of assembly, homodimer. Mg(2+) is required as a cofactor.

The catalysed reaction is orotidine 5'-phosphate + diphosphate = orotate + 5-phospho-alpha-D-ribose 1-diphosphate. It functions in the pathway pyrimidine metabolism; UMP biosynthesis via de novo pathway; UMP from orotate: step 1/2. Catalyzes the transfer of a ribosyl phosphate group from 5-phosphoribose 1-diphosphate to orotate, leading to the formation of orotidine monophosphate (OMP). This Chlamydia caviae (strain ATCC VR-813 / DSM 19441 / 03DC25 / GPIC) (Chlamydophila caviae) protein is Orotate phosphoribosyltransferase.